The sequence spans 73 residues: Toxin Td9 (73 aa).

The signal sequence occupies residues 1-7 (IGMVAEC). One can recognise an LCN-type CS-alpha/beta domain in the interval 8–70 (KDGYLVGDDG…IWNSATNSCG (63 aa)). Disulfide bonds link Cys-18–Cys-69, Cys-22–Cys-44, Cys-30–Cys-50, and Cys-34–Cys-52. Lysine amide is present on Lys-71.

Belongs to the long (4 C-C) scorpion toxin superfamily. Sodium channel inhibitor family. Beta subfamily. Expressed by the venom gland.

It localises to the secreted. Its function is as follows. Beta toxins bind voltage-independently at site-4 of sodium channels (Nav) and shift the voltage of activation toward more negative potentials thereby affecting sodium channel activation and promoting spontaneous and repetitive firing. The chain is Toxin Td9 from Tityus discrepans (Venezuelan scorpion).